A 267-amino-acid chain; its full sequence is 3-oxoadipate enol-lactonase 2 (267 aa).

It carries out the reaction (4,5-dihydro-5-oxofuran-2-yl)-acetate + H2O = 3-oxoadipate + H(+). The protein operates within aromatic compound metabolism; beta-ketoadipate pathway; 3-oxoadipate from 5-oxo-4,5-dihydro-2-furylacetate: step 1/1. This is 3-oxoadipate enol-lactonase 2 (catD) from Acinetobacter baylyi (strain ATCC 33305 / BD413 / ADP1).